The primary structure comprises 404 residues: Pyrophosphate--fructose 6-phosphate 1-phosphotransferase (404 aa).

Residue Gly13 participates in diphosphate binding. Asn108 contributes to the Mg(2+) binding site. Substrate-binding positions include 136-138, 180-182, Glu237, and 295-298; these read TID, MGR, and YLQR. Asp138 acts as the Proton acceptor in catalysis.

The protein belongs to the phosphofructokinase type A (PFKA) family. PPi-dependent PFK group II subfamily. Clade 'B2' sub-subfamily. As to quaternary structure, homodimer. The cofactor is Mg(2+).

The protein localises to the cytoplasm. It carries out the reaction beta-D-fructose 6-phosphate + diphosphate = beta-D-fructose 1,6-bisphosphate + phosphate + H(+). It functions in the pathway carbohydrate degradation; glycolysis; D-glyceraldehyde 3-phosphate and glycerone phosphate from D-glucose: step 3/4. Its activity is regulated as follows. Non-allosteric. Its function is as follows. Catalyzes the phosphorylation of D-fructose 6-phosphate, the first committing step of glycolysis. Uses inorganic phosphate (PPi) as phosphoryl donor instead of ATP like common ATP-dependent phosphofructokinases (ATP-PFKs), which renders the reaction reversible, and can thus function both in glycolysis and gluconeogenesis. Consistently, PPi-PFK can replace the enzymes of both the forward (ATP-PFK) and reverse (fructose-bisphosphatase (FBPase)) reactions. The protein is Pyrophosphate--fructose 6-phosphate 1-phosphotransferase of Rhodospirillum rubrum (strain ATCC 11170 / ATH 1.1.1 / DSM 467 / LMG 4362 / NCIMB 8255 / S1).